The chain runs to 360 residues: S-adenosylmethionine:tRNA ribosyltransferase-isomerase (360 aa).

This sequence belongs to the QueA family. As to quaternary structure, monomer.

The protein localises to the cytoplasm. The enzyme catalyses 7-aminomethyl-7-carbaguanosine(34) in tRNA + S-adenosyl-L-methionine = epoxyqueuosine(34) in tRNA + adenine + L-methionine + 2 H(+). It participates in tRNA modification; tRNA-queuosine biosynthesis. Transfers and isomerizes the ribose moiety from AdoMet to the 7-aminomethyl group of 7-deazaguanine (preQ1-tRNA) to give epoxyqueuosine (oQ-tRNA). This is S-adenosylmethionine:tRNA ribosyltransferase-isomerase from Rhodopseudomonas palustris (strain BisB5).